The chain runs to 459 residues: Elongation factor 1-alpha (459 aa).

Position 2 is a n,N,N-trimethylglycine (G2). At K3 the chain carries N6,N6-dimethyllysine; alternate. Residue K3 is modified to N6-methyllysine; alternate. A tr-type G domain is found at 5-240; sequence KLHVNVVVIG…DAIEPPTRPT (236 aa). Residues 14–21 are G1; the sequence is GHVDSGKS. 14–21 contacts GTP; it reads GHVDSGKS. K30 is modified (N6-methyllysine). The tract at residues 70–74 is G2; the sequence is GITID. Residue K79 is modified to N6,N6,N6-trimethyllysine. A G3 region spans residues 91–94; it reads DAPG. GTP-binding positions include 91 to 95 and 153 to 156; these read DAPGH and NKMD. The G4 stretch occupies residues 153 to 156; sequence NKMD. The tract at residues 192 to 194 is G5; sequence SGW. At K316 the chain carries N6,N6-dimethyllysine; alternate. K316 bears the N6-methyllysine; alternate mark. K390 bears the N6-methyllysine mark.

This sequence belongs to the TRAFAC class translation factor GTPase superfamily. Classic translation factor GTPase family. EF-Tu/EF-1A subfamily.

It localises to the cytoplasm. Its function is as follows. This protein promotes the GTP-dependent binding of aminoacyl-tRNA to the A-site of ribosomes during protein biosynthesis. The sequence is that of Elongation factor 1-alpha (TEF1) from Cryptococcus neoformans var. neoformans serotype D (strain B-3501A) (Filobasidiella neoformans).